The sequence spans 173 residues: CASP-like protein 2D1 (173 aa).

The Cytoplasmic segment spans residues 1 to 9 (MAPLLKLLD). A helical transmembrane segment spans residues 10–29 (SSLRVSVIPLSAATIWLTVT). Topologically, residues 30–50 (NHQDNSSYGNLKYSNIMGLKY) are extracellular. The N-linked (GlcNAc...) asparagine glycan is linked to asparagine 34. The helical transmembrane segment at 51–71 (MVCISAICASYAFVAAVSIWI) threads the bilayer. Residues 72 to 86 (KCLVNKVWLFFVSDQ) lie on the Cytoplasmic side of the membrane. The helical transmembrane segment at 87–107 (IIAYLMVTSVAAAMEILYIAY) threads the bilayer. Residues 108–131 (NGDQKVTWSEACTSYGKFCNGMKT) are Extracellular-facing. The helical transmembrane segment at 132–152 (ALILHALTLCFFIVLAVISAY) threads the bilayer. Topologically, residues 153-173 (RAFSMYQPPVSSKETVEGDAT) are cytoplasmic.

It belongs to the Casparian strip membrane proteins (CASP) family. Homodimer and heterodimers.

The protein localises to the cell membrane. The polypeptide is CASP-like protein 2D1 (Ricinus communis (Castor bean)).